We begin with the raw amino-acid sequence, 141 residues long: Large ribosomal subunit protein uL11 (141 aa).

It belongs to the universal ribosomal protein uL11 family. Part of the ribosomal stalk of the 50S ribosomal subunit. Interacts with L10 and the large rRNA to form the base of the stalk. L10 forms an elongated spine to which L12 dimers bind in a sequential fashion forming a multimeric L10(L12)X complex. In terms of processing, one or more lysine residues are methylated.

Forms part of the ribosomal stalk which helps the ribosome interact with GTP-bound translation factors. The chain is Large ribosomal subunit protein uL11 from Synechococcus sp. (strain CC9902).